We begin with the raw amino-acid sequence, 670 residues long: Solute carrier organic anion transporter family member 1A5 (670 aa).

At 1-20 (MGETEKRIATHGVRCFSKIK) the chain is on the cytoplasmic side. A helical transmembrane segment spans residues 21-40 (MFLLALTCAYVSKSLSGIYM). Residues 41–59 (NSMLTQIERQFDIPTSIVG) lie on the Extracellular side of the membrane. A helical transmembrane segment spans residues 60–80 (LINGSFEIGNLLLIILVSYFG). Over 81–86 (TKLHRP) the chain is Cytoplasmic. The helical transmembrane segment at 87–111 (IMIGIGCVIMGLGCFLMSLPHFLMG) threads the bilayer. At 112 to 155 (RYEYETTISPTSNLSSNSFLCMENRTQTLKPTQDPAECVKEMKS) the chain is on the extracellular side. Asn-124 and Asn-135 each carry an N-linked (GlcNAc...) asparagine glycan. The helical transmembrane segment at 156-184 (LMWIYVLVGNIIRGIGETPIMPLGISYIE) threads the bilayer. Over 185–203 (DFAKSENSPLYIGILESGK) the chain is Cytoplasmic. The helical transmembrane segment at 204–224 (MIGPIVGLLLGSFCARIYVDT) threads the bilayer. Topologically, residues 225–242 (GSVNTDDLTITPTDTRWV) are extracellular. The helical transmembrane segment at 243 to 267 (GAWWIGFLVCAGVNILTSIPFFFFP) threads the bilayer. Over 268 to 311 (KTLPKEGLQDNVARTENDKEEKHREKAKEENRGITKDFLPFMKS) the chain is Cytoplasmic. A helical membrane pass occupies residues 312–333 (LSCNPIYMLLILTSVLQINAFI). Residues 334–353 (NMFTFLPKYLEQQYGKSTSE) are Extracellular-facing. Residues 354–377 (VVLLIGVCNLPPICIGYLLIGFIM) traverse the membrane as a helical segment. Topologically, residues 378-381 (KKFR) are cytoplasmic. A helical transmembrane segment spans residues 382–405 (ITVKKAAYMAFCLSLFEYLLSYFH). Topologically, residues 406-513 (FMISCDNFQV…PECANKLQYF (108 aa)) are extracellular. Residues 433-488 (NKVLADCNTRCSCLTNTWDPVCGDNGLSYMSACLAGCEKSVGMGTHMVFQNCSCIQ) form the Kazal-like domain. 3 cysteine pairs are disulfide-bonded: Cys-439–Cys-469, Cys-445–Cys-465, and Cys-454–Cys-486. Residues Asn-483 and Asn-492 are each glycosylated (N-linked (GlcNAc...) asparagine). A helical membrane pass occupies residues 514–536 (LIMSVIGSFIYSITAIPGYMVLL). Residues 537–545 (RCIKSEEKS) are Cytoplasmic-facing. A helical transmembrane segment spans residues 546-571 (LGIGLHAFCTRIFAGIPAPIYFGALI). At 572-605 (DRTCLHWGTLKCGEPGACRIYNINNFRRIYLVLP) the chain is on the extracellular side. A helical transmembrane segment spans residues 606-623 (AALRGSSYLPAFFILILM). The Cytoplasmic portion of the chain corresponds to 624–670 (RKFQLPGEMYSSETELADMKQTVKKSECTDVHGIPKVENDGELKTKL).

This sequence belongs to the organo anion transporter (TC 2.A.60) family. As to expression, expressed in brain, choroid plexus and lung, but not in liver or kidney.

It is found in the cell membrane. It localises to the basal cell membrane. It carries out the reaction taurocholate(out) = taurocholate(in). The catalysed reaction is glycocholate(out) = glycocholate(in). The enzyme catalyses taurochenodeoxycholate(out) = taurochenodeoxycholate(in). It catalyses the reaction tauroursodeoxycholate(out) = tauroursodeoxycholate(in). It carries out the reaction 3,3',5'-triiodo-L-thyronine(out) = 3,3',5'-triiodo-L-thyronine(in). The catalysed reaction is L-thyroxine(out) = L-thyroxine(in). The enzyme catalyses taurodeoxycholate(out) = taurodeoxycholate(in). It catalyses the reaction glycodeoxycholate(out) = glycodeoxycholate(in). It carries out the reaction glycochenodeoxycholate(out) = glycochenodeoxycholate(in). The catalysed reaction is glycoursodeoxycholate(out) = glycoursodeoxycholate(in). The enzyme catalyses estrone 3-sulfate(out) = estrone 3-sulfate(in). It catalyses the reaction prostaglandin E2(out) = prostaglandin E2(in). It carries out the reaction substance P(out) = substance P(in). Na(+)-independent transporter that mediates the cellular uptake of a broad range of organic anions such as the endogenous bile salts cholate and deoxycholate, either in their unconjugated or conjugated forms (taurocholate and glycocholate), estrone 3-sulfate and prostaglandin E2, at the plasma membrane. Responsible for intestinal absorption of bile acids. Capable of thyroid hormone transport (both T3 or 3,3',5'-triiodo-L-thyronine, and T4 or L-tyroxine). Plays roles in blood-brain and -cerebrospinal fluid barrier transport of organic anions and signal mediators, and in hormone uptake by neural cells. May also play a role in the reuptake of neuropeptides such as substance P/TAC1 and vasoactive intestinal peptide/VIP released from retinal neurons. Shows a pH-sensitive substrate specificity which may be ascribed to the protonation state of the binding site and leads to a stimulation of substrate transport in an acidic microenvironment. Hydrogencarbonate/HCO3(-) acts as the probable counteranion that exchanges for organic anions. May contribute to regulate the transport of organic compounds in testis across the blood-testis-barrier. The polypeptide is Solute carrier organic anion transporter family member 1A5 (Slco1a5) (Mus musculus (Mouse)).